Here is a 598-residue protein sequence, read N- to C-terminus: Aluminum-activated malate transporter 9 (598 aa).

Transmembrane regions (helical) follow at residues 88-108 (IVFS…IFYQ), 117-137 (YSVW…GATL), 144-164 (ALGT…STLF), 170-190 (IFCT…KLYP), 194-214 (AYEY…ISGF), and 227-247 (FLLI…IYPI).

The protein belongs to the aromatic acid exporter (TC 2.A.85) family. Expressed in hypocotyls, leaves, roots, flowers, sepals and stamina. In leaves, expressed almost exclusively in mesophyll cells.

It is found in the vacuole membrane. With respect to regulation, slow activation by external aluminum. Functionally, vacuolar malate channel. Has a higher selectivity for malate than for fumarate. Also exhibits a weak chloride conductance. This is Aluminum-activated malate transporter 9 (ALMT9) from Arabidopsis thaliana (Mouse-ear cress).